Here is a 615-residue protein sequence, read N- to C-terminus: MPIQVLPPQLANQIAAGEVVERPASVVKELVENSLDAGATRIDIDIERGGAKLIRIRDNGCGIKKDELALALARHATSKIASLDDLEAIISLGFRGEALASISSVSRLTLTSRTAEQQEAWQAYAEGRDMNVTVKPAAHPVGTTLEVLDLFYNTPARRKFLRTEKTEFNHIDEIIRRIALARFDVTINLSHNGKIVRQYRAVPEGGQKERRLGAICGTAFLEQALAIEWQHGDLTLRGWVADPNHTTPALAEIQYCYVNGRMMRDRLINHAIRQACEDKLGADQQPAFVLYLEIDPHQVDVNVHPAKHEVRFHQSRLVHDFIYQGVLSVLQQQLETPLPLDDEPQPAPRAIPENRVAAGRNHFAEPAAREPVAPRYTPAPASGSRPAAPWPNAQPGYQKQQGEVYRQLLQTPAPMQKLKAPEPQEPALAANSQSFGRVLTIVHSDCALLERDGNISLLSLPVAERWLRQAQLTPGEAPVCAQPLLIPLRLKVSAEEKSALEKAQSALAELGIDFQSDAQHVTIRAVPLPLRQQNLQILIPELIGYLAKQSVFEPGNIAQWIARNLMSEHAQWSMAQAITLLADVEQLCPQLVKTPPGGLLQSVDLHPAIKALKDE.

A disordered region spans residues Phe-363–Tyr-397. Residues Ala-364 to Pro-391 are compositionally biased toward low complexity.

The protein belongs to the DNA mismatch repair MutL/HexB family.

In terms of biological role, this protein is involved in the repair of mismatches in DNA. It is required for dam-dependent methyl-directed DNA mismatch repair. May act as a 'molecular matchmaker', a protein that promotes the formation of a stable complex between two or more DNA-binding proteins in an ATP-dependent manner without itself being part of a final effector complex. This Escherichia coli O8 (strain IAI1) protein is DNA mismatch repair protein MutL.